Consider the following 85-residue polypeptide: Photosystem I reaction center subunit PsaK (85 aa).

The next 2 helical transmembrane spans lie at 12–34 (TVTW…IAVG) and 54–76 (GGMG…IGAI).

The protein belongs to the PsaG/PsaK family.

The protein resides in the cellular thylakoid membrane. The chain is Photosystem I reaction center subunit PsaK from Parasynechococcus marenigrum (strain WH8102).